A 93-amino-acid chain; its full sequence is Small ribosomal subunit protein uS15c (93 aa).

This sequence belongs to the universal ribosomal protein uS15 family. As to quaternary structure, part of the 30S ribosomal subunit.

The protein localises to the plastid. It localises to the chloroplast. In Jasminum nudiflorum (Winter jasmine), this protein is Small ribosomal subunit protein uS15c (rps15).